The following is a 615-amino-acid chain: MSKKFAHTQEELEKLSLKELENLAASMREKIIQVVSKNGGHLSSNLGAVELSIAMHLVFDAKKDPFIFDVSHQSYTHKLLSGKEEIFDTLRQINGLSGYTKPSEGDYFVAGHSSTSISLAVGACKAIALKGEKRIPVALIGDGALSAGMAYEALNELGDSKFACVILLNDNEMSISKPIGAISKYLSQAMATQFYQSFKKRIAKMLDILPDSATYMAKRFEESFKLITPGLLFEELGLEYIGPIDGHNLGEIISALKQAKAMQKPCVIHAQTIKGKGYALAEGKHAKWHGVGAFDIDSGESVKKSDAKKSATEIFSKNLLDLASKYENIVGVTAAMPSGTGLDKLIEKYPNRFWDVAIAEQHAVTSMAAMAKEGFKPFIAIYSTFLQRAYDQVIHDCAIMNLNVVFAMDRAGIVGEDGETHQGVFDLSFLAPLPNFTLLAPRDEQMMQNIMEYAYLHQGPIAFRYPRGSFILDKEFNPCEIKLGKAQWLVKNNSEIAFLGYGQGVAKAWQVLRALQEMNNNANLIDLIFAKPLDEELLCELAKKSKIWFIFSENVKIGGIESLINNFLQKYDLHVKVVSFEYEDKFIEHGKTSEVEKNLEKDVNSLLTKVLKFYH.

Thiamine diphosphate contacts are provided by residues His-72 and 111-113 (GHS). Asp-142 lines the Mg(2+) pocket. Thiamine diphosphate-binding positions include 143-144 (GA), Asn-171, Tyr-278, and Glu-360. Asn-171 contributes to the Mg(2+) binding site.

It belongs to the transketolase family. DXPS subfamily. Homodimer. Mg(2+) is required as a cofactor. Requires thiamine diphosphate as cofactor.

The catalysed reaction is D-glyceraldehyde 3-phosphate + pyruvate + H(+) = 1-deoxy-D-xylulose 5-phosphate + CO2. It participates in metabolic intermediate biosynthesis; 1-deoxy-D-xylulose 5-phosphate biosynthesis; 1-deoxy-D-xylulose 5-phosphate from D-glyceraldehyde 3-phosphate and pyruvate: step 1/1. Its function is as follows. Catalyzes the acyloin condensation reaction between C atoms 2 and 3 of pyruvate and glyceraldehyde 3-phosphate to yield 1-deoxy-D-xylulose-5-phosphate (DXP). This is 1-deoxy-D-xylulose-5-phosphate synthase from Campylobacter jejuni subsp. jejuni serotype O:6 (strain 81116 / NCTC 11828).